A 219-amino-acid polypeptide reads, in one-letter code: uncharacterized protein (219 aa).

Positions 139-154 are enriched in basic residues; it reads PRKIKQKKKTKKKRPS. A disordered region spans residues 139-160; sequence PRKIKQKKKTKKKRPSKSAPKT. In terms of domain architecture, LysM spans 159–217; it reads KTYTVKKGDTLWDLAGKFYGDSTKWRKIWKVNKKAMIKRSKRNIRQPGHWIFPGQKLKI.

This is an uncharacterized protein from Bacillus subtilis (strain 168).